The primary structure comprises 113 residues: Cytochrome c (113 aa).

Heme c-binding residues include C21, C24, H25, and M90.

The protein belongs to the cytochrome c family. Post-translationally, binds 1 heme c group covalently per subunit.

It localises to the mitochondrion intermembrane space. In terms of biological role, electron carrier protein. The oxidized form of the cytochrome c heme group can accept an electron from the heme group of the cytochrome c1 subunit of cytochrome reductase. Cytochrome c then transfers this electron to the cytochrome oxidase complex, the final protein carrier in the mitochondrial electron-transport chain. This chain is Cytochrome c (cytC), found in Dictyostelium discoideum (Social amoeba).